Reading from the N-terminus, the 429-residue chain is Phosphoribosylamine--glycine ligase (429 aa).

Residues 109-316 enclose the ATP-grasp domain; the sequence is KDFLARHQIP…LVDLCLAACD (208 aa). 135-196 serves as a coordination point for ATP; sequence LREKGAPIVI…EEFLDGEEAS (62 aa). Glu-286 and Asn-288 together coordinate Mg(2+).

Belongs to the GARS family. In terms of assembly, monomer. It depends on Mg(2+) as a cofactor. Mn(2+) is required as a cofactor.

It carries out the reaction 5-phospho-beta-D-ribosylamine + glycine + ATP = N(1)-(5-phospho-beta-D-ribosyl)glycinamide + ADP + phosphate + H(+). It functions in the pathway purine metabolism; IMP biosynthesis via de novo pathway; N(1)-(5-phospho-D-ribosyl)glycinamide from 5-phospho-alpha-D-ribose 1-diphosphate: step 2/2. The sequence is that of Phosphoribosylamine--glycine ligase from Salmonella typhimurium (strain LT2 / SGSC1412 / ATCC 700720).